A 516-amino-acid polypeptide reads, in one-letter code: Probable 2-methylcitrate dehydratase (516 aa).

It belongs to the PrpD family.

It carries out the reaction (2S,3S)-2-methylcitrate = 2-methyl-cis-aconitate + H2O. It participates in organic acid metabolism; propanoate degradation. Functionally, catalyzes the stereospecific dehydration of (2S,3S)-2-methylcitrate (2-MC) to yield the cis isomer of 2-methyl-aconitate. This is Probable 2-methylcitrate dehydratase (PDH1) from Saccharomyces cerevisiae (strain ATCC 204508 / S288c) (Baker's yeast).